Here is a 283-residue protein sequence, read N- to C-terminus: Shikimate dehydrogenase (NADP(+)) (283 aa).

Residues 22–24 (SRS) and Thr-69 each bind shikimate. Catalysis depends on Lys-73, which acts as the Proton acceptor. Residues Asn-93 and Asp-108 each contribute to the shikimate site. NADP(+) contacts are provided by residues 133–137 (GAGGS) and Leu-222. Tyr-224 provides a ligand contact to shikimate. Gly-245 provides a ligand contact to NADP(+).

It belongs to the shikimate dehydrogenase family. As to quaternary structure, homodimer.

It catalyses the reaction shikimate + NADP(+) = 3-dehydroshikimate + NADPH + H(+). It functions in the pathway metabolic intermediate biosynthesis; chorismate biosynthesis; chorismate from D-erythrose 4-phosphate and phosphoenolpyruvate: step 4/7. In terms of biological role, involved in the biosynthesis of the chorismate, which leads to the biosynthesis of aromatic amino acids. Catalyzes the reversible NADPH linked reduction of 3-dehydroshikimate (DHSA) to yield shikimate (SA). The protein is Shikimate dehydrogenase (NADP(+)) of Rhodopseudomonas palustris (strain BisB5).